The following is a 573-amino-acid chain: DNA damage-binding protein CMR1 (573 aa).

The interval 27–94 is disordered; the sequence is DSLNDSISRE…EMEKAEERKR (68 aa). A coiled-coil region spans residues 72–152; sequence TMEDSEEDKQ…EEIKKEEDST (81 aa). Basic and acidic residues predominate over residues 79 to 94; sequence DKQMREEMEKAEERKR. 7 WD repeats span residues 218 to 259, 268 to 308, 319 to 357, 361 to 401, 418 to 456, 495 to 538, and 542 to 573; these read ITQQ…DDET, PHGK…STEV, DYPL…KQGE, LHDK…QKNS, HSRL…KLPL, GRWV…LCHL, and DRMT…YLFE.

This sequence belongs to the WD repeat DDB2/WDR76 family.

Functionally, DNA-binding protein that binds to both single- and double-stranded DNA. Binds preferentially to UV-damaged DNA. May be involved in DNA-metabolic processes. This chain is DNA damage-binding protein CMR1, found in Meyerozyma guilliermondii (strain ATCC 6260 / CBS 566 / DSM 6381 / JCM 1539 / NBRC 10279 / NRRL Y-324) (Yeast).